We begin with the raw amino-acid sequence, 141 residues long: Large ribosomal subunit protein uL11 (141 aa).

It belongs to the universal ribosomal protein uL11 family. As to quaternary structure, part of the ribosomal stalk of the 50S ribosomal subunit. Interacts with L10 and the large rRNA to form the base of the stalk. L10 forms an elongated spine to which L12 dimers bind in a sequential fashion forming a multimeric L10(L12)X complex. One or more lysine residues are methylated.

Its function is as follows. Forms part of the ribosomal stalk which helps the ribosome interact with GTP-bound translation factors. In Helicobacter acinonychis (strain Sheeba), this protein is Large ribosomal subunit protein uL11.